The chain runs to 156 residues: Protein SprT (156 aa).

The 139-residue stretch at 15–153 (NRYFNKHFTP…CKKCKEILVL (139 aa)) folds into the SprT-like domain. His67 lines the Zn(2+) pocket. Glu68 is a catalytic residue. His71 contacts Zn(2+).

The protein belongs to the SprT family. Zn(2+) serves as cofactor.

Its subcellular location is the cytoplasm. In Glaesserella parasuis serovar 5 (strain SH0165) (Haemophilus parasuis), this protein is Protein SprT.